The sequence spans 438 residues: MKPLHYTASALALGLALMGNAQAVTTIPFWHSMEGELGKEVDSLAQRFNAENPDYKIVPTYKGNYEQNLSAGIAAFRTGNAPAILQVYEVGTATMMASKAIQPVYDVFKEAGIQFDESQFVPTVSGYYSDSKTGHLLSQPFNSSTPVLYYNKDAFKKAGLDPEQPPKTWQDLADYAAKLKASGMKCGYASGWQGRIQLENFSAWNGLPFASKNNGFDGTDAVLEFNKPEQVKHIAMLEEMNKKGDFSYVGRKDESTEKFYNGDCAMTTASSGSLANIREYAKFNYGVGMMPYDADAKDAPQNAIIGGASLWVMQGKDKETYTGVAKFLDFLAKPENAAEWHQKTGYLPITKAAYDLTREQGFYEKNPGADTATRQMLNKPPLPFTKGLRLGNMPQIRVIVDEELESVWTGKKTPQQALDTAVERGNQLLRRFEKSTKS.

The N-terminal stretch at 1 to 23 is a signal peptide; it reads MKPLHYTASALALGLALMGNAQA. Residues Y65, E89, S144, S270, G307, Y346, and R397 each coordinate sn-glycerol 3-phosphate.

The protein belongs to the bacterial solute-binding protein 1 family. The complex is composed of two ATP-binding proteins (UgpC), two transmembrane proteins (UgpA and UgpE) and a solute-binding protein (UgpB).

It localises to the periplasm. Part of the ABC transporter complex UgpBAEC involved in sn-glycerol-3-phosphate (G3P) import. Binds G3P. The polypeptide is sn-glycerol-3-phosphate-binding periplasmic protein UgpB (ugpB) (Shigella dysenteriae serotype 1 (strain Sd197)).